Reading from the N-terminus, the 407-residue chain is Multifunctional CCA protein (407 aa).

ATP is bound by residues Gly-8 and Arg-11. Positions 8 and 11 each coordinate CTP. Residues Asp-21 and Asp-23 each coordinate Mg(2+). ATP is bound by residues Arg-91, Arg-137, and Arg-140. CTP is bound by residues Arg-91, Arg-137, and Arg-140. The HD domain occupies 228-329 (TGVHALMALA…VALFDRVDAW (102 aa)).

It belongs to the tRNA nucleotidyltransferase/poly(A) polymerase family. Bacterial CCA-adding enzyme type 1 subfamily. As to quaternary structure, monomer. Can also form homodimers and oligomers. It depends on Mg(2+) as a cofactor. The cofactor is Ni(2+).

It catalyses the reaction a tRNA precursor + 2 CTP + ATP = a tRNA with a 3' CCA end + 3 diphosphate. The enzyme catalyses a tRNA with a 3' CCA end + 2 CTP + ATP = a tRNA with a 3' CCACCA end + 3 diphosphate. In terms of biological role, catalyzes the addition and repair of the essential 3'-terminal CCA sequence in tRNAs without using a nucleic acid template. Adds these three nucleotides in the order of C, C, and A to the tRNA nucleotide-73, using CTP and ATP as substrates and producing inorganic pyrophosphate. tRNA 3'-terminal CCA addition is required both for tRNA processing and repair. Also involved in tRNA surveillance by mediating tandem CCA addition to generate a CCACCA at the 3' terminus of unstable tRNAs. While stable tRNAs receive only 3'-terminal CCA, unstable tRNAs are marked with CCACCA and rapidly degraded. This Erwinia tasmaniensis (strain DSM 17950 / CFBP 7177 / CIP 109463 / NCPPB 4357 / Et1/99) protein is Multifunctional CCA protein.